The chain runs to 248 residues: Myelin protein P0 (248 aa).

The signal sequence occupies residues 1-29 (MAPGAPSSSPSPILAALLFSSLVLSPALA). One can recognise an Ig-like V-type domain in the interval 30-143 (IVVYTDREIY…DIVGKTSQVT (114 aa)). At 30–153 (IVVYTDREIY…LYVFEKVPTR (124 aa)) the chain is on the extracellular side. Residues Cys-50 and Cys-127 are joined by a disulfide bond. The N-linked (GlcNAc...) (complex) asparagine glycan is linked to Asn-122. A helical transmembrane segment spans residues 154 to 179 (YGVVLGAVIGGILGVVLLLLLLFYLI). The Cytoplasmic segment spans residues 180–248 (RYCWLRRQAA…GLGESRKDKK (69 aa)). Position 210 is a phosphoserine; by PKC (Ser-210). The interval 222–248 (MLDHSRSTKAASEKKSKGLGESRKDKK) is disordered. The span at 224 to 248 (DHSRSTKAASEKKSKGLGESRKDKK) shows a compositional bias: basic and acidic residues. Ser-226 and Ser-228 each carry phosphoserine. The residue at position 233 (Ser-233) is a Phosphoserine; by PKC. Residues Ser-237 and Ser-243 each carry the phosphoserine modification.

The protein belongs to the myelin P0 protein family. Homodimer and homotetramer. N-glycosylated; contains sulfate-substituted glycan. As to expression, found only in peripheral nervous system Schwann cells.

It is found in the cell membrane. In terms of biological role, is an adhesion molecule necessary for normal myelination in the peripheral nervous system. It mediates adhesion between adjacent myelin wraps and ultimately drives myelin compaction. In Mus musculus (Mouse), this protein is Myelin protein P0 (Mpz).